Here is a 428-residue protein sequence, read N- to C-terminus: Threonine synthase (428 aa).

An N6-(pyridoxal phosphate)lysine modification is found at K107.

Belongs to the threonine synthase family. Pyridoxal 5'-phosphate is required as a cofactor.

It carries out the reaction O-phospho-L-homoserine + H2O = L-threonine + phosphate. It functions in the pathway amino-acid biosynthesis; L-threonine biosynthesis; L-threonine from L-aspartate: step 5/5. Its activity is regulated as follows. Is competitively inhibited by L-threo-3-hydroxyhomoserine phosphate. Functionally, catalyzes the gamma-elimination of phosphate from L-phosphohomoserine and the beta-addition of water to produce L-threonine. To a lesser extent, is able to slowly catalyze the deamination of L-threonine into alpha-ketobutyrate and that of L-serine and 3-chloroalanine into pyruvate. Is also able to rapidly convert vinylglycine to threonine, which proves that the pyridoxal p-quinonoid of vinylglycine is an intermediate in the TS reaction. The sequence is that of Threonine synthase (thrC) from Escherichia coli (strain K12).